The chain runs to 643 residues: Mitochondrial Rho GTPase 2 (643 aa).

The Cytoplasmic portion of the chain corresponds to 1-611; sequence MMLGGKSSAG…SGRRSRNIRQ (611 aa). One can recognise a Miro 1 domain in the interval 12–179; that stretch reads RTSLRVAVAG…FYFASKAVLH (168 aa). EF-hand domains lie at 195–230 and 315–350; these read RLRR…CFGA and EAMD…APDS. Residues D208, D210, D212, E219, D328, D330, D332, and E339 each contribute to the Ca(2+) site. The region spanning 423-592 is the Miro 2 domain; it reads RNVFQCFVFG…FSRIVSTAEN (170 aa). The chain crosses the membrane as a helical span at residues 612–632; it reads LVNSSLLFVSVGTAVGFAGLA. The Mitochondrial intermembrane segment spans residues 633–643; the sequence is AYRAYSARKNA.

This sequence belongs to the mitochondrial Rho GTPase family. Expressed roots, rosette and cauline leaves, stems, flowers and siliques.

The protein localises to the mitochondrion outer membrane. With respect to regulation, activated by calcium. In terms of biological role, calcium-binding mitochondrial GTPase involved in calcium signaling during salt stress response. May play a role in the progression of embryonic cell division, development of haploid male and female gametes, and pollen tube growth. The sequence is that of Mitochondrial Rho GTPase 2 from Arabidopsis thaliana (Mouse-ear cress).